Consider the following 174-residue polypeptide: D(1B) dopamine receptor (174 aa).

Residues 1 to 10 traverse the membrane as a helical segment; it reads SILNLCIISV. The Cytoplasmic portion of the chain corresponds to 11–32; that stretch reads DRYWAISRPFCYERKMTQRVAL. Residues 33 to 54 form a helical membrane-spanning segment; the sequence is VMVGLAWTLSILISFIPVQLHW. The Extracellular segment spans residues 55–96; it reads HRDKVGSRDGLDPPSNLANGTPWEEAGESDRSAENCDSSLNR. The segment at 64-88 is disordered; it reads GLDPPSNLANGTPWEEAGESDRSAE. A glycan (N-linked (GlcNAc...) asparagine) is linked at asparagine 95. A helical membrane pass occupies residues 97–119; that stretch reads TYAISSSLISFYIPVAIMIVTYT. Residues 120–169 lie on the Cytoplasmic side of the membrane; the sequence is RIYRIAQVQIRRISSLERAAEHAQSCRSREACAPDSGLRASIKKETKVLK. Residues 170 to 174 traverse the membrane as a helical segment; sequence TLSVI.

This sequence belongs to the G-protein coupled receptor 1 family.

The protein localises to the cell membrane. Dopamine receptor whose activity is mediated by G proteins which activate adenylyl cyclase. The sequence is that of D(1B) dopamine receptor (DRD5) from Bos taurus (Bovine).